Consider the following 115-residue polypeptide: Large ribosomal subunit protein bL19 (115 aa).

Belongs to the bacterial ribosomal protein bL19 family.

In terms of biological role, this protein is located at the 30S-50S ribosomal subunit interface and may play a role in the structure and function of the aminoacyl-tRNA binding site. This chain is Large ribosomal subunit protein bL19, found in Streptococcus uberis (strain ATCC BAA-854 / 0140J).